A 519-amino-acid polypeptide reads, in one-letter code: Probable DNA ligase (519 aa).

Residue glutamate 221 coordinates ATP. The N6-AMP-lysine intermediate role is filled by lysine 223. Residues arginine 228, arginine 243, glutamate 272, phenylalanine 312, arginine 384, and lysine 390 each coordinate ATP.

This sequence belongs to the ATP-dependent DNA ligase family. The cofactor is Mg(2+).

The catalysed reaction is ATP + (deoxyribonucleotide)n-3'-hydroxyl + 5'-phospho-(deoxyribonucleotide)m = (deoxyribonucleotide)n+m + AMP + diphosphate.. Functionally, DNA ligase that seals nicks in double-stranded DNA during DNA replication, DNA recombination and DNA repair. The polypeptide is Probable DNA ligase (Mycolicibacterium paratuberculosis (strain ATCC BAA-968 / K-10) (Mycobacterium paratuberculosis)).